The sequence spans 337 residues: MVREEVRVCTRTLQWKCVESRADNKRLYYGRFILSPLMKGQADTIGIAMRRALLGEIEGTCITCAKSEKIPHEYSNIVGIEESVHEILMNLKEIVLRSNLYGTRDASICVRGPRHVTAQDIISPPSVEIIDTTQHIASLTEPIDLCIGLQIERNRGYNMKTPKNSQDGRYPIDAVFMPVRNANHSIHSYGNGNEKQEILFLEIWTNGSLTPKEALHEASRNLIDLFIPFLHANEENFILKDNQNKVALPLFTFHDRLAKQRKNKKEISFQCIFIDQSELPPRTYNCLKRSNIHTLLDLLNNSQEDLMKIEHFRIEDVKQILGILQKHFAIDLPKNKF.

The alpha N-terminal domain (alpha-NTD) stretch occupies residues 1–232 (MVREEVRVCT…IDLFIPFLHA (232 aa)). The tract at residues 266–337 (EISFQCIFID…FAIDLPKNKF (72 aa)) is alpha C-terminal domain (alpha-CTD).

The protein belongs to the RNA polymerase alpha chain family. In terms of assembly, in plastids the minimal PEP RNA polymerase catalytic core is composed of four subunits: alpha, beta, beta', and beta''. When a (nuclear-encoded) sigma factor is associated with the core the holoenzyme is formed, which can initiate transcription.

Its subcellular location is the plastid. The protein localises to the chloroplast. The catalysed reaction is RNA(n) + a ribonucleoside 5'-triphosphate = RNA(n+1) + diphosphate. DNA-dependent RNA polymerase catalyzes the transcription of DNA into RNA using the four ribonucleoside triphosphates as substrates. This Buxus microphylla (Littleleaf boxwood) protein is DNA-directed RNA polymerase subunit alpha.